Reading from the N-terminus, the 85-residue chain is SPbeta prophage-derived uncharacterized protein YoqG (85 aa).

The polypeptide is SPbeta prophage-derived uncharacterized protein YoqG (yoqG) (Bacillus subtilis (strain 168)).